The primary structure comprises 2336 residues: Voltage-dependent N-type calcium channel subunit alpha-1B (2336 aa).

The interval Met1–Leu37 is disordered. The Cytoplasmic segment spans residues Met1–Arg90. Gly residues predominate over residues Gly10–Leu37. Residue Arg22 is modified to Omega-N-methylarginine. The I repeat unit spans residues Asn82 to Phe359. A helical membrane pass occupies residues Ile91 to Leu114. The Extracellular segment spans residues Glu115 to Asp131. A helical transmembrane segment spans residues Asp132–Leu152. Topologically, residues Gly153–Arg163 are cytoplasmic. The helical transmembrane segment at Asn164–Ala182 threads the bilayer. The Extracellular portion of the chain corresponds to Gly183 to Asp187. A helical transmembrane segment spans residues Leu188–Val211. The Cytoplasmic portion of the chain corresponds to Val212–Val221. The chain crosses the membrane as a helical span at residues Pro222–Phe244. At Tyr245 to Trp331 the chain is on the extracellular side. N-linked (GlcNAc...) asparagine glycosylation is present at Asn256. Residues Asn332–Ser356 form a helical membrane-spanning segment. At Gly357–Gln483 the chain is on the cytoplasmic side. The segment at Gln379–Glu396 is binding to the beta subunit. Ser411 bears the Phosphoserine mark. Ala452 to Thr459 is a binding site for ATP. Residues Glu469–Leu713 form an II repeat. The helical transmembrane segment at Ser484 to Met502 threads the bilayer. The Extracellular segment spans residues Val503–Thr512. A helical membrane pass occupies residues Thr513–Tyr535. Over Gly536–Ser545 the chain is Cytoplasmic. Residue Ser545 participates in a 1,2-diacyl-sn-glycero-3-phospho-(1D-myo-inositol-4,5-bisphosphate) binding. The helical transmembrane segment at Ser546–Ile567 threads the bilayer. The Extracellular segment spans residues Lys568–Gly574. Residues Ile575–Phe587 traverse the membrane as a helical segment. Arg585 and Lys588 together coordinate a 1,2-diacyl-sn-glycero-3-phospho-(1D-myo-inositol-4,5-bisphosphate). Over Lys588–Asn605 the chain is Cytoplasmic. The chain crosses the membrane as a helical span at residues Ser606–Leu631. The Extracellular portion of the chain corresponds to Phe632–Gly683. A helical membrane pass occupies residues Met684–Val710. The Cytoplasmic portion of the chain corresponds to Asp711 to Tyr1149. Residues Ser746, Ser749, and Ser784 each carry the phosphoserine modification. Disordered regions lie at residues Tyr800–Lys1021 and Glu1051–Val1076. 6 stretches are compositionally biased toward basic and acidic residues: residues Val806 to Leu827, Glu870 to Ala891, Gly920 to Pro930, His938 to Glu948, Gly970 to Thr981, and Pro996 to Lys1021. Residues Gln1059 to Val1076 are compositionally biased toward polar residues. The residue at position 1067 (Ser1067) is a Phosphoserine. An III repeat occupies Asn1135–Phe1421. Residues Phe1150–Glu1168 traverse the membrane as a helical segment. Topologically, residues Asp1169–Phe1176 are extracellular. A helical membrane pass occupies residues Arg1177–Ile1201. Residues Asp1202–Asp1215 are Cytoplasmic-facing. Residues Leu1216–Gly1240 form a helical membrane-spanning segment. Residues Ser1241–Ile1246 are Extracellular-facing. A helical membrane pass occupies residues Asn1247–Leu1267. At Pro1268–Leu1285 the chain is on the cytoplasmic side. The chain crosses the membrane as a helical span at residues Asn1286 to Leu1305. Topologically, residues Phe1306–Met1392 are extracellular. A helical transmembrane segment spans residues Glu1393 to Ile1418. The Cytoplasmic segment spans residues Ile1419 to Pro1473. An IV repeat occupies Asn1458–Phe1711. Residues Pro1474–Met1492 form a helical membrane-spanning segment. Over Lys1493–Glu1500 the chain is Extracellular. A helical membrane pass occupies residues Tyr1501–Ile1525. Residues Ala1526–Asp1535 are Cytoplasmic-facing. Residues Ala1536–Ile1557 form a helical membrane-spanning segment. The Extracellular segment spans residues Ala1558 to Asn1563. Asn1563 carries an N-linked (GlcNAc...) asparagine glycan. The helical transmembrane segment at Leu1564–Gly1582 threads the bilayer. Residues Tyr1583–Tyr1601 are Cytoplasmic-facing. A helical transmembrane segment spans residues Val1602–Phe1621. Over Gly1622–Phe1683 the chain is Extracellular. A glycan (N-linked (GlcNAc...) asparagine) is linked at Asn1675. The chain crosses the membrane as a helical span at residues Ala1684–Ile1707. Residues Met1708–Cys2336 are Cytoplasmic-facing. The region spanning His1724 to Pro1759 is the EF-hand domain. The Ca(2+) site is built by Asp1737, Arg1743, and Asp1748. The tract at residues Thr1981–Thr2202 is disordered. The span at Ser2048–Lys2062 shows a compositional bias: basic residues. Ser2065 carries the post-translational modification Phosphoserine. A compositionally biased stretch (basic and acidic residues) spans Cys2097–Gln2113. The span at Gly2161–Ser2177 shows a compositional bias: polar residues. Ser2221, Ser2230, and Ser2253 each carry phosphoserine.

This sequence belongs to the calcium channel alpha-1 subunit (TC 1.A.1.11) family. CACNA1B subfamily. As to quaternary structure, multisubunit complex consisting of alpha-1, alpha-2, beta and delta subunits in a 1:1:1:1 ratio. The channel activity is directed by the pore-forming and voltage-sensitive alpha-1 subunit. In many cases, this subunit is sufficient to generate voltage-sensitive calcium channel activity. The auxiliary subunits beta and alpha-2/delta linked by a disulfide bridge regulate the channel activity. Interacts with RIMS1. Interacts with FMR1 (via C-terminus); this interaction induces a decrease in the number of presynaptic functional CACNA1B channels at the cell surface. Phosphorylated in vitro by CaM-kinase II, PKA, PKC and CGPK. Central nervous system.

The protein localises to the membrane. It catalyses the reaction Ca(2+)(in) = Ca(2+)(out). Is specifically blocked by omega-conotoxin GVIA. Is specifically blocked by omega-conotoxin MVIIA (ziconotide). Is insensitive to dihydropyridines (DHP). Functionally, voltage-sensitive calcium channels (VSCC) mediate the entry of calcium ions into excitable cells and are also involved in a variety of calcium-dependent processes, including muscle contraction, hormone or neurotransmitter release, gene expression, cell motility, cell division and cell death. This alpha-1B subunit gives rise to N-type calcium currents. N-type calcium channels belong to the 'high-voltage activated' (HVA) group. They are involved in pain signaling. Calcium channels containing alpha-1B subunit may play a role in directed migration of immature neurons. Mediates Ca(2+) release probability at hippocampal neuronal soma and synaptic terminals. In Rattus norvegicus (Rat), this protein is Voltage-dependent N-type calcium channel subunit alpha-1B (Cacna1b).